A 557-amino-acid chain; its full sequence is MNYLHNFKDTLFVDLLEVLNIVTIGEEHVNQLNLSGDASLSASSESSNMSFNSGSEENSQEKSVEDLEKQNCEINIHKNSDKEADTKKDPFLVTFNGEDDPLMPYNWSTNKKALIIIQTMLLTCVNYMGSSIYTPGQLEIQNEFHVGHVVGTLNLSLYVLGYGLGPIVFSPLTEISSIGRLPVYMITFFLFTMLQIGCALAPNFAGLVILRFITGVLCSPALSTGGATLGDIVSQNYLALVLGLWSIGAVAAPVLAPLLGASMVVAKDWRWIFWLLFFCCCATMLLLTFFFPETSSDTVLHRKAARIRKLTGDNRYYTEKEREEAQLPKKQFLIETLYRPFSMMITEPIVLAFDLYIALCYGAFYLFFEAFPIVFGGIYHFTLVEQGLAYFGFCVGCIFAYIILLVFSIKVAAKRFANNTFTPETTLILAMCIGWCIPLALFMFGWTAKVHWILPIISEVFFVLGCFNIFQASFSYLAICYPKYVASVFAGNGFARSSFAAAFPLFGQAMYNNLGTKNYPVAWGSSLVGFFTIGLWVIPFVLYKYGPSLRSMSKYNR.

Residues N33, N48, and N106 are each glycosylated (N-linked (GlcNAc...) asparagine). Residues 44–57 (SESSNMSFNSGSEE) are compositionally biased toward low complexity. Positions 44–67 (SESSNMSFNSGSEENSQEKSVEDL) are disordered. 8 helical membrane-spanning segments follow: residues 113–133 (ALIIIQTMLLTCVNYMGSSIY), 149–169 (VVGTLNLSLYVLGYGLGPIVF), 181–201 (LPVYMITFFLFTMLQIGCALA), 204–224 (FAGLVILRFITGVLCSPALST), 238–258 (LALVLGLWSIGAVAAPVLAPL), 271–291 (WIFWLLFFCCCATMLLLTFFF), 355–375 (LYIALCYGAFYLFFEAFPIVF), and 387–407 (GLAYFGFCVGCIFAYIILLVF). A glycan (N-linked (GlcNAc...) asparagine) is linked at N418. 4 consecutive transmembrane segments (helical) span residues 426 to 446 (TLILAMCIGWCIPLALFMFGW), 450 to 470 (VHWILPIISEVFFVLGCFNIF), 484 to 506 (YVASVFAGNGFARSSFAAAFPLF), and 521 to 541 (VAWGSSLVGFFTIGLWVIPFV).

The protein belongs to the major facilitator superfamily.

It is found in the cell membrane. Multidrug transporter that confers resistance to 5-flucytosine (5-FC) and clotrimazole. Also confers resistance to benomyl, but not 4-nitroquinoline-N-oxide, cycloheximide, or fluconazole. Plays direct roles in extrusion of 5-flucytosine and clotrimazole. The polypeptide is Multidrug transporter FLR1 (Candida glabrata (strain ATCC 2001 / BCRC 20586 / JCM 3761 / NBRC 0622 / NRRL Y-65 / CBS 138) (Yeast)).